The sequence spans 233 residues: Purine nucleoside phosphorylase DeoD-type (233 aa).

H4 serves as a coordination point for a purine D-ribonucleoside. Phosphate-binding positions include G20, R24, R43, and 87-90 (RVGT). A purine D-ribonucleoside-binding positions include E162, 179 to 181 (EME), and 203 to 204 (SD). D204 functions as the Proton donor in the catalytic mechanism.

The protein belongs to the PNP/UDP phosphorylase family. In terms of assembly, homohexamer; trimer of homodimers.

The catalysed reaction is a purine D-ribonucleoside + phosphate = a purine nucleobase + alpha-D-ribose 1-phosphate. It catalyses the reaction a purine 2'-deoxy-D-ribonucleoside + phosphate = a purine nucleobase + 2-deoxy-alpha-D-ribose 1-phosphate. Functionally, catalyzes the reversible phosphorolytic breakdown of the N-glycosidic bond in the beta-(deoxy)ribonucleoside molecules, with the formation of the corresponding free purine bases and pentose-1-phosphate. This is Purine nucleoside phosphorylase DeoD-type from Alkaliphilus metalliredigens (strain QYMF).